We begin with the raw amino-acid sequence, 227 residues long: Cytochrome c oxidase subunit 2 (227 aa).

Over 1 to 14 (MAYPFQLGLQDATS) the chain is Mitochondrial intermembrane. A helical transmembrane segment spans residues 15 to 45 (PIMEELTNFHDHTLMIVFLISSLVLYIISLM). Topologically, residues 46–59 (LTTKLTHTSTMDAQ) are mitochondrial matrix. Residues 60–87 (EVETIWTILPAVILILIALPSLRILYMM) traverse the membrane as a helical segment. The Mitochondrial intermembrane segment spans residues 88-227 (DEINNPVLTV…YFENWSASMI (140 aa)). Positions 161, 196, 198, 200, 204, and 207 each coordinate Cu cation. Glutamate 198 contacts Mg(2+). Phosphotyrosine is present on tyrosine 218.

The protein belongs to the cytochrome c oxidase subunit 2 family. As to quaternary structure, component of the cytochrome c oxidase (complex IV, CIV), a multisubunit enzyme composed of 14 subunits. The complex is composed of a catalytic core of 3 subunits MT-CO1, MT-CO2 and MT-CO3, encoded in the mitochondrial DNA, and 11 supernumerary subunits COX4I, COX5A, COX5B, COX6A, COX6B, COX6C, COX7A, COX7B, COX7C, COX8 and NDUFA4, which are encoded in the nuclear genome. The complex exists as a monomer or a dimer and forms supercomplexes (SCs) in the inner mitochondrial membrane with NADH-ubiquinone oxidoreductase (complex I, CI) and ubiquinol-cytochrome c oxidoreductase (cytochrome b-c1 complex, complex III, CIII), resulting in different assemblies (supercomplex SCI(1)III(2)IV(1) and megacomplex MCI(2)III(2)IV(2)). Found in a complex with TMEM177, COA6, COX18, COX20, SCO1 and SCO2. Interacts with TMEM177 in a COX20-dependent manner. Interacts with COX20. Interacts with COX16. Requires Cu cation as cofactor.

The protein resides in the mitochondrion inner membrane. It carries out the reaction 4 Fe(II)-[cytochrome c] + O2 + 8 H(+)(in) = 4 Fe(III)-[cytochrome c] + 2 H2O + 4 H(+)(out). Its function is as follows. Component of the cytochrome c oxidase, the last enzyme in the mitochondrial electron transport chain which drives oxidative phosphorylation. The respiratory chain contains 3 multisubunit complexes succinate dehydrogenase (complex II, CII), ubiquinol-cytochrome c oxidoreductase (cytochrome b-c1 complex, complex III, CIII) and cytochrome c oxidase (complex IV, CIV), that cooperate to transfer electrons derived from NADH and succinate to molecular oxygen, creating an electrochemical gradient over the inner membrane that drives transmembrane transport and the ATP synthase. Cytochrome c oxidase is the component of the respiratory chain that catalyzes the reduction of oxygen to water. Electrons originating from reduced cytochrome c in the intermembrane space (IMS) are transferred via the dinuclear copper A center (CU(A)) of subunit 2 and heme A of subunit 1 to the active site in subunit 1, a binuclear center (BNC) formed by heme A3 and copper B (CU(B)). The BNC reduces molecular oxygen to 2 water molecules using 4 electrons from cytochrome c in the IMS and 4 protons from the mitochondrial matrix. This chain is Cytochrome c oxidase subunit 2 (MT-CO2), found in Dacnomys millardi (Millard's rat).